A 375-amino-acid polypeptide reads, in one-letter code: S-(hydroxymethyl)glutathione dehydrogenase (375 aa).

Position 40 (cysteine 40) interacts with Zn(2+). Position 41 (histidine 41) interacts with NAD(+). Histidine 62, glutamate 63, cysteine 92, cysteine 95, cysteine 98, cysteine 106, and cysteine 170 together coordinate Zn(2+). Residues 195–200 (GLGGIG), aspartate 219, 293–295 (IGV), and 318–320 (TAF) contribute to the NAD(+) site.

The protein belongs to the zinc-containing alcohol dehydrogenase family. Class-III subfamily. Homotetramer. Requires Zn(2+) as cofactor.

The enzyme catalyses a primary alcohol + NAD(+) = an aldehyde + NADH + H(+). It catalyses the reaction a secondary alcohol + NAD(+) = a ketone + NADH + H(+). The catalysed reaction is S-(hydroxymethyl)glutathione + NADP(+) = S-formylglutathione + NADPH + H(+). It carries out the reaction S-(hydroxymethyl)glutathione + NAD(+) = S-formylglutathione + NADH + H(+). The enzyme catalyses S-nitrosoglutathione + NADH + H(+) = S-(hydroxysulfenamide)glutathione + NAD(+). Functionally, oxidizes long-chain alcohols and, in the presence of glutathione, is able to oxidize formaldehyde. Also acts as a S-nitroso-glutathione reductase by catalyzing the NADH-dependent reduction of S-nitrosoglutathione, thereby regulating protein S-nitrosylation. The sequence is that of S-(hydroxymethyl)glutathione dehydrogenase (flhA) from Paracoccus denitrificans.